A 196-amino-acid polypeptide reads, in one-letter code: MEDFMIEFLSKLQIFISKNITIKRLGIENIKNLCGVDIAYKGNIGYAVSVMFDGKDYFHKYVKGKVDFPYIPGYLFMREAPLMIKAVESFQCDLILVDGHGMAHPRKSGIASVIGVILDKPTIGVAKSKLYGDIVEEGSTNFIVVNGDKVGVKVGKYYYSIGNKVDIDDVVELSRNGYPKVLALADKLSKELKKKE.

Positions 37 and 98 each coordinate Mg(2+).

This sequence belongs to the endonuclease V family. Mg(2+) is required as a cofactor.

The protein localises to the cytoplasm. It catalyses the reaction Endonucleolytic cleavage at apurinic or apyrimidinic sites to products with a 5'-phosphate.. In terms of biological role, DNA repair enzyme involved in the repair of deaminated bases. Selectively cleaves double-stranded DNA at the second phosphodiester bond 3' to a deoxyinosine leaving behind the intact lesion on the nicked DNA. This chain is Endonuclease V, found in Sulfolobus acidocaldarius (strain ATCC 33909 / DSM 639 / JCM 8929 / NBRC 15157 / NCIMB 11770).